A 292-amino-acid chain; its full sequence is Universal stress protein Mb2346c (292 aa).

The protein belongs to the universal stress protein A family.

The protein is Universal stress protein Mb2346c of Mycobacterium bovis (strain ATCC BAA-935 / AF2122/97).